Here is a 434-residue protein sequence, read N- to C-terminus: 3-phosphoshikimate 1-carboxyvinyltransferase (434 aa).

The 3-phosphoshikimate site is built by lysine 22, serine 23, and arginine 27. Lysine 22 contacts phosphoenolpyruvate. 2 residues coordinate phosphoenolpyruvate: glycine 93 and arginine 121. Serine 168, serine 169, glutamine 170, serine 199, aspartate 320, and lysine 347 together coordinate 3-phosphoshikimate. Phosphoenolpyruvate is bound at residue glutamine 170. Catalysis depends on aspartate 320, which acts as the Proton acceptor. Phosphoenolpyruvate-binding residues include arginine 351, arginine 394, and lysine 419.

The protein belongs to the EPSP synthase family. In terms of assembly, monomer.

It localises to the cytoplasm. The catalysed reaction is 3-phosphoshikimate + phosphoenolpyruvate = 5-O-(1-carboxyvinyl)-3-phosphoshikimate + phosphate. Its pathway is metabolic intermediate biosynthesis; chorismate biosynthesis; chorismate from D-erythrose 4-phosphate and phosphoenolpyruvate: step 6/7. Functionally, catalyzes the transfer of the enolpyruvyl moiety of phosphoenolpyruvate (PEP) to the 5-hydroxyl of shikimate-3-phosphate (S3P) to produce enolpyruvyl shikimate-3-phosphate and inorganic phosphate. This Paraburkholderia phytofirmans (strain DSM 17436 / LMG 22146 / PsJN) (Burkholderia phytofirmans) protein is 3-phosphoshikimate 1-carboxyvinyltransferase.